A 924-amino-acid polypeptide reads, in one-letter code: Periplasmic nitrate reductase (924 aa).

A signal peptide (tat-type signal) is located at residues Met1–Ala29. One can recognise a 4Fe-4S Mo/W bis-MGD-type domain in the interval Trp35–Asp91. Cys42, Cys45, Cys49, and Cys77 together coordinate [4Fe-4S] cluster. Residues Lys79, Gln147, Asn172, Cys176, Trp209–Met216, Met417, Gln421, Asn527, Ser552–Asp553, Lys575, Asp602, and Thr814–Ser823 each bind Mo-bis(molybdopterin guanine dinucleotide). Trp890 serves as a coordination point for substrate. Residues Asn898 and Lys915 each contribute to the Mo-bis(molybdopterin guanine dinucleotide) site.

Belongs to the prokaryotic molybdopterin-containing oxidoreductase family. NasA/NapA/NarB subfamily. Component of the periplasmic nitrate reductase NapAB complex composed of NapA and NapB. [4Fe-4S] cluster is required as a cofactor. Mo-bis(molybdopterin guanine dinucleotide) serves as cofactor. Predicted to be exported by the Tat system. The position of the signal peptide cleavage has not been experimentally proven.

Its subcellular location is the periplasm. The enzyme catalyses 2 Fe(II)-[cytochrome] + nitrate + 2 H(+) = 2 Fe(III)-[cytochrome] + nitrite + H2O. Functionally, catalytic subunit of the periplasmic nitrate reductase complex NapAB. Receives electrons from NapB and catalyzes the reduction of nitrate to nitrite. The sequence is that of Periplasmic nitrate reductase from Campylobacter lari (strain RM2100 / D67 / ATCC BAA-1060).